The chain runs to 285 residues: Retron Ec67 DNA adenine methylase (285 aa).

Residues Trp-7, Lys-11, Asp-51, and Asp-179 each contribute to the S-adenosyl-L-methionine site.

It belongs to the N(4)/N(6)-methyltransferase family.

It carries out the reaction a 2'-deoxyadenosine in DNA + S-adenosyl-L-methionine = an N(6)-methyl-2'-deoxyadenosine in DNA + S-adenosyl-L-homocysteine + H(+). An alpha subtype methylase that recognizes the double-stranded sequence 5'-GATC-3' and methylates A-2 on both strands. May play a regulatory role in the functions of the retron. The chain is Retron Ec67 DNA adenine methylase from Escherichia coli.